The chain runs to 680 residues: Harmonin-binding protein USHBP1 (680 aa).

Basic residues predominate over residues 1-15 (MSARATRPRSRRGRH). 2 disordered regions span residues 1–51 (MSAR…YLGP) and 134–161 (KSVE…PGQQ). A coiled-coil region spans residues 179-218 (NREDELACTQASLQDAQAEKETLQRQVQELEDSLMQMEAS). Disordered regions lie at residues 220–247 (PTPI…VPQD) and 384–405 (TMEV…PTPE). 2 coiled-coil regions span residues 363–386 (TKGD…ATME) and 467–506 (QIQQ…LRAQ). Positions 524-549 (FAGDGSSGGSSEDPSSEEEAGEDRQQ) are disordered. Residues 573–662 (QELSASLARA…QAEELAVLTA (90 aa)) adopt a coiled-coil conformation.

This sequence belongs to the MCC family. As to quaternary structure, interacts via its C-terminus with the first PDZ domain of USH1C.

The protein is Harmonin-binding protein USHBP1 of Mus musculus (Mouse).